The following is a 1265-amino-acid chain: Dynactin subunit 1 (1265 aa).

One can recognise a CAP-Gly domain in the interval 27-69; it reads GMTSFAVGKWVGVVLDEPKGKNSGSIKGQQYFQCDENCGMFVR. The disordered stretch occupies residues 81–179; the sequence is GSRRSIEDVS…GNGAASHASS (99 aa). Phosphoserine occurs at positions 85, 110, 114, 117, and 121. 2 stretches are compositionally biased toward low complexity: residues 103–138 and 161–177; these read RLSS…SSSS and AEGA…ASHA. The residue at position 183 (serine 183) is a Phosphoserine. Coiled-coil stretches lie at residues 213 to 570, 812 to 836, and 967 to 1084; these read NSGA…ESLQ, LIQF…RLPS, and QRAQ…NSTT. A disordered region spans residues 1082–1106; that stretch reads STTGKVQPGSESHSPHNISLSGNTS. Serine 1117 is subject to Phosphoserine. Residues 1128 to 1160 adopt a coiled-coil conformation; the sequence is EEVELLKNAFNQERNQRLRLQAQDMRAKLSQFE.

This sequence belongs to the dynactin 150 kDa subunit family. Monomer and homodimer. Subunit of dynactin, a multiprotein complex part of a tripartite complex with dynein and a adapter, such as BICDL1, BICD2 or HOOK3. The dynactin complex is built around ACTR1A/ACTB filament and consists of an actin-related filament composed of a shoulder domain, a pointed end and a barbed end. Its length is defined by its flexible shoulder domain. The soulder is composed of 2 DCTN1 subunits, 4 DCTN2 and 2 DCTN3. DCTN1/p150(glued) binds directly to microtubules and to cytoplasmic dynein.

It is found in the cytoplasm. The protein localises to the cytoskeleton. Part of the dynactin complex that activates the molecular motor dynein for ultra-processive transport along microtubules. Plays a key role in dynein-mediated retrograde transport of vesicles and organelles along microtubules by recruiting and tethering dynein to microtubules. Binds to both dynein and microtubules providing a link between specific cargos, microtubules and dynein. Essential for targeting dynein to microtubule plus ends, recruiting dynein to membranous cargos and enhancing dynein processivity (the ability to move along a microtubule for a long distance without falling off the track). Can also act as a brake to slow the dynein motor during motility along the microtubule. Can regulate microtubule stability by promoting microtubule formation, nucleation and polymerization and by inhibiting microtubule catastrophe in neurons. Inhibits microtubule catastrophe by binding both to microtubules and to tubulin, leading to enhanced microtubule stability along the axon. Plays a role in metaphase spindle orientation. Plays a role in centriole cohesion and subdistal appendage organization and function. Its recruitment to the centriole in a KIF3A-dependent manner is essential for the maintenance of centriole cohesion and the formation of subdistal appendage. Also required for microtubule anchoring at the mother centriole. Plays a role in primary cilia formation. This is Dynactin subunit 1 from Drosophila melanogaster (Fruit fly).